A 259-amino-acid polypeptide reads, in one-letter code: Major cell-binding factor (259 aa).

The signal sequence occupies residues 1–26 (MVFRKSLLKLAVFALGACVAFSNANA).

This sequence belongs to the bacterial solute-binding protein 3 family.

Its subcellular location is the cell surface. Functionally, common antigen and a major cell adherence molecule. Most probably involved, with PEB1C, in a binding-protein-dependent transport system for an amino acid. May be involved in binding to intestinal cells. In Campylobacter jejuni subsp. jejuni serotype O:2 (strain ATCC 700819 / NCTC 11168), this protein is Major cell-binding factor (peb1A).